The chain runs to 1904 residues: Fatty acid synthase beta subunit hexB (1904 aa).

The interval 24–395 (LSVAFGGQGP…TEGTGVRVIQ (372 aa)) is acetyltransferase (AT) domain. The segment at 447–691 (TQLLNAPPVM…LIVQTEGVGD (245 aa)) is enoyl reductase (ER) domain. Positions 1001–1491 (GPAADCWTHH…RPNDRLKIQL (491 aa)) are dehydratase (DH) domain. One can recognise a MaoC-like domain in the interval 1399 to 1512 (PGWNEGSTVL…MKVQAFNDET (114 aa)). Residues 1530–1893 (YVFCGQGSQE…IEHVQSVTGS (364 aa)) form a malonyl/palmitoyl transferase (MT/PT) domain region.

This sequence belongs to the fungal fatty acid synthetase subunit beta family. As to quaternary structure, [Alpha(6)beta(6)] hexamers of two multifunctional subunits (alpha and beta).

The enzyme catalyses acetyl-CoA + n malonyl-CoA + 2n NADPH + 4n H(+) = a long-chain-acyl-CoA + n CoA + n CO2 + 2n NADP(+).. The catalysed reaction is holo-[ACP] + acetyl-CoA = acetyl-[ACP] + CoA. It carries out the reaction holo-[ACP] + malonyl-CoA = malonyl-[ACP] + CoA. It catalyses the reaction a (3R)-hydroxyacyl-[ACP] = a (2E)-enoyl-[ACP] + H2O. The enzyme catalyses a 2,3-saturated acyl-[ACP] + NAD(+) = a (2E)-enoyl-[ACP] + NADH + H(+). The catalysed reaction is (9Z)-octadecenoyl-[ACP] + H2O = (9Z)-octadecenoate + holo-[ACP] + H(+). It functions in the pathway mycotoxin biosynthesis. Its function is as follows. Fatty acid synthase beta subunit; part of the fragmented gene cluster that mediates the biosynthesis of dothistromin (DOTH), a polyketide toxin very similar in structure to the aflatoxin precursor, versicolorin B. The first step of the pathway is the conversion of acetate to norsolorinic acid (NOR) and requires the fatty acid synthase subunits hexA and hexB, as well as the polyketide synthase pksA. PksA combines a hexanoyl starter unit and 7 malonyl-CoA extender units to synthesize the precursor NOR. The hexanoyl starter unit is provided to the acyl-carrier protein (ACP) domain by the fungal fatty acid synthase hexA/hexB. The second step is the conversion of NOR to averantin (AVN) and requires the norsolorinic acid ketoreductase nor1, which catalyzes the dehydration of norsolorinic acid to form (1'S)-averantin. The cytochrome P450 monooxygenase avnA then catalyzes the hydroxylation of AVN to 5'hydroxyaverantin (HAVN). The next step is performed by adhA that transforms HAVN to averufin (AVF). Averufin might then be converted to hydroxyversicolorone by cypX and avfA. Hydroxyversicolorone is further converted versiconal hemiacetal acetate (VHA) by moxY. VHA is then the substrate for the versiconal hemiacetal acetate esterase est1 to yield versiconal (VAL). Versicolorin B synthase vbsA then converts VAL to versicolorin B (VERB) by closing the bisfuran ring. Then, the activity of the versicolorin B desaturase verB leads to versicolorin A (VERA). DotB, a predicted chloroperoxidase, may perform epoxidation of the A-ring of VERA. Alternatively, a cytochrome P450, such as cypX or avnA could catalyze this step. It is also possible that another, uncharacterized, cytochrome P450 enzyme is responsible for this step. Opening of the epoxide could potentially be achieved by the epoxide hydrolase epoA. However, epoA seems not to be required for DOTH biosynthesis, but other epoxide hydrolases may have the ability to complement this hydrolysis. Alternatively, opening of the epoxide ring could be achieved non-enzymatically. The next step is the deoxygenation of ring A to yield the 5,8-dihydroxyanthraquinone which is most likely catalyzed by the NADPH dehydrogenase encoded by ver1. The last stages of DOTH biosynthesis are proposed to involve hydroxylation of the bisfuran. OrdB and norB might have oxidative roles here. An alternative possibility is that cytochrome P450 monoogenases such as avnA and cypX might perform these steps in addition to previously proposed steps. The chain is Fatty acid synthase beta subunit hexB from Dothistroma septosporum (strain NZE10 / CBS 128990) (Red band needle blight fungus).